A 99-amino-acid polypeptide reads, in one-letter code: Ragulator complex protein LAMTOR4 (99 aa).

N-acetylmethionine is present on Met-1. Thr-2 carries the N-acetylthreonine; in Ragulator complex protein LAMTOR4, N-terminally processed modification. Ser-67 is subject to Phosphoserine.

The protein belongs to the LAMTOR4 family. As to quaternary structure, part of the Ragulator complex composed of LAMTOR1, LAMTOR2, LAMTOR3, LAMTOR4 and LAMTOR5. LAMTOR4 and LAMTOR5 form a heterodimer that interacts, through LAMTOR1, with a LAMTOR2, LAMTOR3 heterodimer. The Ragulator complex interacts with both the mTORC1 complex and heterodimers constituted of the Rag GTPases RagA/RRAGA, RagB/RRAGB, RagC/RRAGC and RagD/RRAGD; regulated by amino acid availability. The Ragulator complex interacts with SLC38A9; the probable amino acid sensor. Component of the lysosomal folliculin complex (LFC), composed of FLCN, FNIP1 (or FNIP2), RagA/RRAGA or RagB/RRAGB GDP-bound, RagC/RRAGC or RagD/RRAGD GTP-bound, and Ragulator. In terms of processing, phosphorylation at Ser-67 by PKA inhibits Ragulator complex assembly.

The protein localises to the lysosome. As part of the Ragulator complex it is involved in amino acid sensing and activation of mTORC1, a signaling complex promoting cell growth in response to growth factors, energy levels, and amino acids. Activated by amino acids through a mechanism involving the lysosomal V-ATPase, the Ragulator plays a dual role for the small GTPases Rag (RagA/RRAGA, RagB/RRAGB, RagC/RRAGC and/or RagD/RRAGD): it (1) acts as a guanine nucleotide exchange factor (GEF), activating the small GTPases Rag and (2) mediates recruitment of Rag GTPases to the lysosome membrane. Activated Ragulator and Rag GTPases function as a scaffold recruiting mTORC1 to lysosomes where it is in turn activated. The protein is Ragulator complex protein LAMTOR4 (LAMTOR4) of Bos taurus (Bovine).